Reading from the N-terminus, the 129-residue chain is C-phycocyanin beta subunit (129 aa).

N62 is subject to N4-methylasparagine. C116 lines the (2R,3E)-phycocyanobilin pocket.

Belongs to the phycobiliprotein family. In terms of assembly, heterodimer of an alpha and a beta subunit, which further assembles into trimers and the trimers into hexamers. Post-translationally, two isomers exist. In terms of processing, contains two covalently linked bilin chromophores.

The protein resides in the cellular thylakoid membrane. Light-harvesting photosynthetic bile pigment-protein from the phycobiliprotein complex (phycobilisome, PBS). Phycocyanin is the major phycobiliprotein in the PBS rod. The polypeptide is C-phycocyanin beta subunit (Aphanizomenon flos-aquae).